The primary structure comprises 251 residues: Hydroxyacylglutathione hydrolase (251 aa).

Positions 53, 55, 57, 58, 110, 127, and 165 each coordinate Zn(2+).

The protein belongs to the metallo-beta-lactamase superfamily. Glyoxalase II family. Monomer. Requires Zn(2+) as cofactor.

The catalysed reaction is an S-(2-hydroxyacyl)glutathione + H2O = a 2-hydroxy carboxylate + glutathione + H(+). It functions in the pathway secondary metabolite metabolism; methylglyoxal degradation; (R)-lactate from methylglyoxal: step 2/2. Thiolesterase that catalyzes the hydrolysis of S-D-lactoyl-glutathione to form glutathione and D-lactic acid. This Enterobacter sp. (strain 638) protein is Hydroxyacylglutathione hydrolase.